The chain runs to 362 residues: Peptide chain release factor 1 (362 aa).

The residue at position 238 (Gln238) is an N5-methylglutamine.

Belongs to the prokaryotic/mitochondrial release factor family. Post-translationally, methylated by PrmC. Methylation increases the termination efficiency of RF1.

It is found in the cytoplasm. Functionally, peptide chain release factor 1 directs the termination of translation in response to the peptide chain termination codons UAG and UAA. This chain is Peptide chain release factor 1, found in Psychrobacter cryohalolentis (strain ATCC BAA-1226 / DSM 17306 / VKM B-2378 / K5).